Here is a 503-residue protein sequence, read N- to C-terminus: Endoglycoceramidase (503 aa).

Residues 1 to 21 (MAETQPLVFVLMSISAILTAG) form the signal peptide. Residues Asn-72, Asn-108, and Asn-205 are each glycosylated (N-linked (GlcNAc...) asparagine). Glu-239 acts as the Proton donor in catalysis. N-linked (GlcNAc...) asparagine glycosylation is found at Asn-307, Asn-409, and Asn-485.

It belongs to the glycosyl hydrolase 5 (cellulase A) family.

Its subcellular location is the secreted. The protein localises to the nematocyst. The catalysed reaction is an oligoglycosyl-(1-&gt;4)-beta-D-glucosyl-(1&lt;-&gt;1)-ceramide + H2O = an oligoglycosyl-(1-&gt;4)-D-glucose + an N-acyl-sphingoid base. With respect to regulation, completely inhibited by Hg(2+). Cu(2+) and zinc have no effect on enzyme activity. Lithium, potassium, manganese, Ni(2+), calcium, magnesium and EDTA have no significant effect on enzyme activity. Enzyme requires presence of detergents such as Triton X-100 and Lubrol PX for the hydrolysis of glycosphingolipids. Taurodeoxycholate strongly inhibits the enzyme activity and SDS completely inhibits the enzyme activity. Its function is as follows. Hydrolysis of the glycosidic linkage between oligosaccharides and ceramides of glycosphingolipids, especially b-series polysialogangliosides. The protein is Endoglycoceramidase of Cyanea nozakii (Jellyfish).